Here is a 639-residue protein sequence, read N- to C-terminus: Complex I assembly factor Egm, mitochondrial (639 aa).

The N-terminal 26 residues, 1–26 (MRPNLFSGASRLLTYSRNGKLLTRGR), are a transit peptide targeting the mitochondrion. Residues 23-65 (TRGRSTKATSSSLDSQHQDAATTEGGRAESVEESPEQQRKLPT) are disordered. A compositionally biased stretch (polar residues) spans 28 to 43 (TKATSSSLDSQHQDAA). Positions 48 to 65 (GRAESVEESPEQQRKLPT) are enriched in basic and acidic residues.

It belongs to the acyl-CoA dehydrogenase family. Associates with mitochondrial complex I assembly intermediates during its biogenesis. The cofactor is FAD.

It localises to the mitochondrion. In terms of biological role, as part of the MCIA complex, primarily participates in the assembly of the mitochondrial complex I and therefore plays a role in oxidative phosphorylation. This Drosophila melanogaster (Fruit fly) protein is Complex I assembly factor Egm, mitochondrial.